Reading from the N-terminus, the 328-residue chain is Peroxidase 59 (328 aa).

Residues 1-28 (MKTQTKVMGGHVLLTVFTLCMLCSGVRA) form the signal peptide. At glutamine 29 the chain carries Pyrrolidone carboxylic acid. 4 disulfides stabilise this stretch: cysteine 39–cysteine 116, cysteine 72–cysteine 77, cysteine 122–cysteine 323, and cysteine 200–cysteine 232. The active-site Proton acceptor is histidine 70. 5 residues coordinate Ca(2+): aspartate 71, valine 74, glycine 76, aspartate 78, and serine 80. Proline 163 lines the substrate pocket. Asparagine 182 is a glycosylation site (N-linked (GlcNAc...) asparagine). Residue histidine 193 coordinates heme b. Threonine 194 lines the Ca(2+) pocket. N-linked (GlcNAc...) asparagine glycosylation is found at asparagine 209 and asparagine 239. Positions 245, 248, 251, and 253 each coordinate Ca(2+). N-linked (GlcNAc...) asparagine glycosylation is found at asparagine 281 and asparagine 310.

Belongs to the peroxidase family. Classical plant (class III) peroxidase subfamily. The cofactor is heme b. Requires Ca(2+) as cofactor. As to expression, slightly expressed in roots.

The protein localises to the secreted. It catalyses the reaction 2 a phenolic donor + H2O2 = 2 a phenolic radical donor + 2 H2O. In terms of biological role, removal of H(2)O(2), oxidation of toxic reductants, biosynthesis and degradation of lignin, suberization, auxin catabolism, response to environmental stresses such as wounding, pathogen attack and oxidative stress. These functions might be dependent on each isozyme/isoform in each plant tissue. In Arabidopsis thaliana (Mouse-ear cress), this protein is Peroxidase 59 (PER59).